Reading from the N-terminus, the 491-residue chain is UDP-N-acetylmuramate--L-alanine ligase (491 aa).

Residue 126–132 (GTHGKTT) participates in ATP binding.

It belongs to the MurCDEF family.

It localises to the cytoplasm. It carries out the reaction UDP-N-acetyl-alpha-D-muramate + L-alanine + ATP = UDP-N-acetyl-alpha-D-muramoyl-L-alanine + ADP + phosphate + H(+). Its pathway is cell wall biogenesis; peptidoglycan biosynthesis. In terms of biological role, cell wall formation. This Shigella sonnei (strain Ss046) protein is UDP-N-acetylmuramate--L-alanine ligase.